The following is a 97-amino-acid chain: Putative pterin-4-alpha-carbinolamine dehydratase (97 aa).

This sequence belongs to the pterin-4-alpha-carbinolamine dehydratase family.

It carries out the reaction (4aS,6R)-4a-hydroxy-L-erythro-5,6,7,8-tetrahydrobiopterin = (6R)-L-erythro-6,7-dihydrobiopterin + H2O. The chain is Putative pterin-4-alpha-carbinolamine dehydratase from Brucella abortus (strain S19).